The chain runs to 2371 residues: NBAS subunit of NRZ tethering complex (2371 aa).

Residues 1 to 1035 (MAAPESGPAL…KTEATTKLHD (1035 aa)) are interaction with USE1. WD repeat units follow at residues 130–169 (DPKPQWRRVAWSYDCTLLAYAESTGTVRVFDLMGSELFVI) and 316–355 (QEQDGIFKMSLSPDGMLLAAIHFSGKLSIWAIPSLKQQGE). Phosphoserine is present on residues Ser473 and Ser475. Residues 1036–2371 (MVDQLEQILS…TALRAAQHWV (1336 aa)) are interaction with ZW10 and RINT1. At Lys1057 the chain carries N6-acetyllysine.

As to quaternary structure, component of the NRZ complex composed of NBAS, ZW10 and RINT1/TIP20L; NRZ associates with SNAREs STX18, USE1, BNIP1/SEC20L and SEC22B (the assembly has been described as syntaxin 18 complex); links NRZ to SNARE USE1. In terms of tissue distribution, broadly expressed, with highest levels in heart and skeletal muscle, and lowest levels in liver, small intestine and thymus. Well expressed in retinal ganglion cells, epidermal skin cells, and leukocytes. Up-regulated together with N-myc in some neuroblastoma cell lines.

Its subcellular location is the cytoplasm. It localises to the endoplasmic reticulum. The protein localises to the endoplasmic reticulum membrane. Involved in Golgi-to-endoplasmic reticulum (ER) retrograde transport; the function is proposed to depend on its association in the NRZ complex which is believed to play a role in SNARE assembly at the ER. Required for normal embryonic development. May play a role in the nonsense-mediated decay pathway of mRNAs containing premature stop codons. The sequence is that of NBAS subunit of NRZ tethering complex from Homo sapiens (Human).